Consider the following 224-residue polypeptide: Charged multivesicular body protein 4b (224 aa).

The disordered stretch occupies residues M1–Q23. S2 carries the N-acetylserine modification. The tract at residues S2–V153 is intramolecular interaction with C-terminus. K6 is subject to N6-acetyllysine. The segment covering F8–G19 has biased composition (gly residues). A coiled-coil region spans residues Q23–I183. At K114 the chain carries N6-acetyllysine. The intramolecular interaction with N-terminus stretch occupies residues G154–M224. S184 and S223 each carry phosphoserine. Residues G185–M224 form a disordered region.

The protein belongs to the SNF7 family. In terms of assembly, probable core component of the endosomal sorting required for transport complex III (ESCRT-III). ESCRT-III components are thought to multimerize to form a flat lattice on the perimeter membrane of the endosome. Several assembly forms of ESCRT-III may exist that interact and act sequentially. Interacts with CHMP6 and CHMP4C. Interacts with PDCD6IP; the interaction is direct. Interacts with VPS4A; the interaction is direct. Interacts with VPS4B; the interaction is direct. Interacts with CHMP7. Interacts with CFTR; the interaction requires misfolded CFTR. Interacts with PTPN23. Interacts with CC2D1B. Post-translationally, ISGylated. Isgylation weakens its interaction with VPS4A.

The protein resides in the cytoplasm. Its subcellular location is the cytosol. It localises to the late endosome membrane. It is found in the midbody. The protein localises to the nucleus envelope. Functionally, probable core component of the endosomal sorting required for transport complex III (ESCRT-III) which is involved in multivesicular bodies (MVBs) formation and sorting of endosomal cargo proteins into MVBs. MVBs contain intraluminal vesicles (ILVs) that are generated by invagination and scission from the limiting membrane of the endosome and mostly are delivered to lysosomes enabling degradation of membrane proteins, such as stimulated growth factor receptors, lysosomal enzymes and lipids. The MVB pathway appears to require the sequential function of ESCRT-O, -I,-II and -III complexes. ESCRT-III proteins mostly dissociate from the invaginating membrane before the ILV is released. The ESCRT machinery also functions in topologically equivalent membrane fission events, such as the terminal stages of cytokinesis. Together with SPAST, the ESCRT-III complex promotes nuclear envelope sealing and mitotic spindle disassembly during late anaphase. Plays a role in the endosomal sorting pathway. ESCRT-III proteins are believed to mediate the necessary vesicle extrusion and/or membrane fission activities, possibly in conjunction with the AAA ATPase VPS4. When overexpressed, membrane-assembled circular arrays of CHMP4B filaments can promote or stabilize negative curvature and outward budding. CHMP4A/B/C are required for the exosomal release of SDCBP, CD63 and syndecan. Majority of the protein exists in a folded closed conformation. The chain is Charged multivesicular body protein 4b (Chmp4b) from Mus musculus (Mouse).